We begin with the raw amino-acid sequence, 337 residues long: MPTKSTFSRWKKADLIDLANKLEIDGFPNYAKKSDMIDYLESHLNHLEKPVDFKDDYPELRSFYESMTVDQSKDERNEYGSGSGNGSGSGSCDTATNDSDLEKAYIKEDDDEKPQSGDETSATKPLSSRNANSNAKTNFNLLDFSTDNDSSTSAFTKFKFNFQEYLSDIRYQTQKLNENVQDYLSTISAVDTIFSLLEFSFLVRNILAAGQPTSSSSLASSLEAAVAAHNKYQYTLDFCLPILTWLLFFRGIPTLVSYYINFIRYDLNIELDPMTFNLTKFLISLAIFKTCNNKNIDFHSFRCVNQLWTQLCTVNRSLGMVPLVFSMVSCLLTLYVL.

At methionine 1 to cysteine 239 the chain is on the cytoplasmic side. Residues serine 66, serine 72, serine 99, and serine 116 each carry the phosphoserine modification. Residues serine 66–alanine 95 are disordered. The segment at lysine 107–asparagine 132 is disordered. The segment covering glycine 117 to asparagine 132 has biased composition (polar residues). The helical transmembrane segment at leucine 240–isoleucine 260 threads the bilayer. At asparagine 261–threonine 313 the chain is on the perinuclear space side. The chain crosses the membrane as a helical span at residues valine 314–valine 336. Residue leucine 337 is a topological domain, cytoplasmic.

The protein resides in the nucleus membrane. This chain is Glutathione transferase 3 (GTT3), found in Saccharomyces cerevisiae (strain ATCC 204508 / S288c) (Baker's yeast).